Consider the following 179-residue polypeptide: tRNA-splicing endonuclease (179 aa).

Active-site residues include tyrosine 115, histidine 125, and lysine 156.

The protein belongs to the tRNA-intron endonuclease family. Archaeal short subfamily. As to quaternary structure, homotetramer; although the tetramer contains four active sites, only two participate in the cleavage. Therefore, it should be considered as a dimer of dimers.

The enzyme catalyses pretRNA = a 3'-half-tRNA molecule with a 5'-OH end + a 5'-half-tRNA molecule with a 2',3'-cyclic phosphate end + an intron with a 2',3'-cyclic phosphate and a 5'-hydroxyl terminus.. Functionally, endonuclease that removes tRNA introns. Cleaves pre-tRNA at the 5'- and 3'-splice sites to release the intron. The products are an intron and two tRNA half-molecules bearing 2',3' cyclic phosphate and 5'-OH termini. Recognizes a pseudosymmetric substrate in which 2 bulged loops of 3 bases are separated by a stem of 4 bp. The chain is tRNA-splicing endonuclease (endA) from Methanocaldococcus jannaschii (strain ATCC 43067 / DSM 2661 / JAL-1 / JCM 10045 / NBRC 100440) (Methanococcus jannaschii).